A 189-amino-acid chain; its full sequence is dCTP deaminase, dUMP-forming (189 aa).

Residues 101-106 (KSSLGR), Asp119, 127-129 (TLE), Gln148, Tyr162, and Gln174 contribute to the dCTP site. Glu129 serves as the catalytic Proton donor/acceptor.

The protein belongs to the dCTP deaminase family. In terms of assembly, homotrimer.

It carries out the reaction dCTP + 2 H2O = dUMP + NH4(+) + diphosphate. It participates in pyrimidine metabolism; dUMP biosynthesis; dUMP from dCTP: step 1/1. Its function is as follows. Bifunctional enzyme that catalyzes both the deamination of dCTP to dUTP and the hydrolysis of dUTP to dUMP without releasing the toxic dUTP intermediate. This is dCTP deaminase, dUMP-forming from Rhodococcus jostii (strain RHA1).